A 903-amino-acid polypeptide reads, in one-letter code: MTTIHSRQMLQEHVSMEFSSSTTHVQTFSQTTKIVGEEVVRRKSSSIVEFFSLVTRSSNIPAGDSVPEFVEKPQPVTAPEGDKAVFRARVQGNAKPHISWKRESGIPIKESAKIFYDSINKEHVLKLEPLTSDDSDNYKCIASNDHADAIYTVSLLVTEGQEKMDFKKMLKKRAPPAPKKKQKKVANEKEMLEILSKVPKKDFEKVCMEYGFTDFRGLLRKLKEMKKKVEVEAIRILKPLEDKETKVDTTVVFDCIMELKDPNVKMIWIKGTEPLRIQYSLGKYDVKQMGTKYMLVISNVNMNDAGIYSLSVGDKRMSAELTVLDEPLKFLGEMKPVKVTERQTAVFEIRLSKKEPNFVWKFNGKELKRDDKYEITVSEDGLTHTLKIKDARLSDSGEFSAEAGNLVQKAQLTVDRIPIKFVSNLKNVRVKERSRACLECELTSKDVTLRWKKDGQLLMHGTKYSMNHEGKRAELIIEDAQLSDGGEYTVVAMQDGDPTEYYSTAIVTVEERLATVKSGMSDVHAATGSPAELCVVLNDEKVEGVWLKDGKEITDLPGMQIVKQGAVHKLIFPSMGPEHEGKYTFRAKGTESEASVFIADPPTIDPSVLEALAAHAITVKVGHTAHIKVPFRGKPLPKVTWYKDGMEVTEEERVSMERGEDQALLTISNCVREDSGLILLKLKNDHGSATATLHLSVLEPPGFASQPQVTDVTKEAVTITWNAPTQDGGAPVLGYIVERRKKGSNLWVPVNKDPIQGTKCTVDGLLEDTEYEFRVIAVNKAGPGQPSVPSSSVVAKDPVKPPGLVQDLHVSDSSNSSISLAWREPAEGDPPSGYILEMRAEDTKEWSKCTKIPISGTCYTVGGLIERQKYFFRIRAVNEAGVGEPVELDKGVRAMPPPGLTTT.

4 Ig-like domains span residues Pro67–Thr158, Glu232–Thr322, Pro418–Thr508, and Pro606–Ser696. Fibronectin type-III domains follow at residues Phe703–Pro798 and Leu804–Pro898.

This chain is Immunoglobulin superfamily member 22 (IGSF22), found in Homo sapiens (Human).